Consider the following 839-residue polypeptide: MNLSKGTAAAYCSGYSEDVDVIREREYPLLKDTTYLDHAGTTLYANSLIHSFGRDLTGNLYGNPHSMSASSQLSAQRVDDIRLRALRFFNADPDEFDLVFVANATAGIKLVADALQNSPQGFWYGYYVDAHTSLVGVRELAKMGSRCFVNEDEVDSWISGLGSRREESLGLFAYPAQSNMNGRRVPMRWCEQIRAQKENADNMIYTLLDAASFVSTSPLDLSKIAAAPDFTVLSFYKIFGFPDLGALIVRKSSGDVFKHRKFFGGGTVDMVLTDGNPWHAKKQSSIHQSLEDGTLPFHSIIALDSAFETHGRLFRSMENVASHTRFLAKRLRDRMNALKHYNGTKVCQLYMSPNSSYDDASSQGPILAFNLRNSRGMWIGKSEVERLASIKNIQIRSGTLCNPGGTALSLGWTGADMLRHFSAGMRCGDDHDIMDERPTGILRISLGAMSSLTDVDTFIAFLEEFYVDKPPEGLPVPLTGNVSLHQPSFYVESLSVYPIKSCGAFRIPDGQRWEVRREGLAWDREWCLVHQGTGITLNQKRYPRMALIRPTLDLERCLLRITCGEANSRDGKTLEISLNRIGTNSLTTSLCQNASKPSTVCGDKVVLQAYTSPAVSRFFTDFLGVPCTLARFPPQSSTRFHSRATAAINRDQNYSQKQSPSMPGSFPQAPSSPDPYPTPILLSNESPLLLISRSSVNRLNESIKSASQPCSNPGSAASKKAVAADVFRANVVVAENISTAERPYIEDTWASLSIGSGPEQLRFDVLGSCERCQMVCVDQYTGQRGDEPYATLAKTRKIDRKILFGRHISPVGRPKDAENGCLGTIMVGDAVTPSYDNES.

Lysine 237 is subject to N6-(pyridoxal phosphate)lysine. The active site involves cysteine 401. A compositionally biased stretch (polar residues) spans 651-662 (DQNYSQKQSPSM). The segment at 651–678 (DQNYSQKQSPSMPGSFPQAPSSPDPYPT) is disordered. Residues 656–834 (QKQSPSMPGS…IMVGDAVTPS (179 aa)) enclose the MOSC domain.

The protein belongs to the class-V pyridoxal-phosphate-dependent aminotransferase family. MOCOS subfamily. It depends on pyridoxal 5'-phosphate as a cofactor.

The enzyme catalyses Mo-molybdopterin + L-cysteine + AH2 = thio-Mo-molybdopterin + L-alanine + A + H2O. Its pathway is cofactor biosynthesis; molybdopterin biosynthesis. Its function is as follows. Sulfurates the molybdenum cofactor. Sulfation of molybdenum is essential for xanthine dehydrogenase (XDH) and aldehyde oxidase (ADO) enzymes in which molybdenum cofactor is liganded by 1 oxygen and 1 sulfur atom in active form. This is Molybdenum cofactor sulfurase from Emericella nidulans (strain FGSC A4 / ATCC 38163 / CBS 112.46 / NRRL 194 / M139) (Aspergillus nidulans).